The sequence spans 997 residues: Autophagy-related protein 9 (997 aa).

Residues 1 to 318 (MERDEYQLPN…DVYNYYLGNG (318 aa)) are Cytoplasmic-facing. S19 bears the Phosphoserine mark. Polar residues predominate over residues 29 to 39 (VNPSLNSQEMS). Residues 29 to 88 (VNPSLNSQEMSNFPLPDIERGSSLLHSTNDSREDVDENDLRVPESDQGTSTEEEDEVDEE) form a disordered region. Over residues 79–88 (TEEEDEVDEE) the composition is skewed to acidic residues. Glycyl lysine isopeptide (Lys-Gly) (interchain with G-Cter in ubiquitin) cross-links involve residues K113 and K121. S122 carries the post-translational modification Phosphoserine. 2 disordered regions span residues 127-159 (LVEGSTDDSVPKVGQLSSEEEEDNEFINNDGFD) and 214-234 (HHDKDKSANNGPRNINGNQKH). K138 participates in a covalent cross-link: Glycyl lysine isopeptide (Lys-Gly) (interchain with G-Cter in ubiquitin). Phosphoserine is present on residues S143 and S144. Residues 144–159 (SEEEEDNEFINNDGFD) are compositionally biased toward acidic residues. Polar residues predominate over residues 221–233 (ANNGPRNINGNQK). The chain crosses the membrane as a helical span at residues 319 to 339 (FYCIILEKILNICTLLFVVFV). Residues 340-376 (STYMGHCVDYSKLPTSHRVSDIIIDKCYSNSITGFTK) are Lumenal-facing. The helical transmembrane segment at 377–397 (FFLWMFYFFVILKIVQLYFDV) threads the bilayer. Residues 398–538 (QKLSELQNFY…EELQKRFMLA (141 aa)) lie on the Cytoplasmic side of the membrane. An intramembrane segment occupies 539–559 (GFLNIILAPFLVTYFVLLYFF). The Cytoplasmic segment spans residues 560 to 620 (RYFNEYKTSP…DQFPKEKTNL (61 aa)). Residues 621 to 641 (FLKFVSFICGSFVAILAFLTV) traverse the membrane as a helical segment. Over 642 to 656 (FDPENFLNFEITSDR) the chain is Lumenal. S657 carries the phosphoserine modification. Residues 657-677 (SVIFYITILGAIWSVSRNTIT) traverse the membrane as a helical segment. Residues 678–723 (QEYHVFDPEETLKELYEYTHYLPKEWEGRYHKEEIKLEFCKLYNLR) lie on the Cytoplasmic side of the membrane. K701 is covalently cross-linked (Glycyl lysine isopeptide (Lys-Gly) (interchain with G-Cter in ubiquitin)). An intramembrane segment occupies 724-744 (IVILLRELTSLMITPFVLWFS). Residues 745–997 (LPSSAGRIVD…EYYKKSDVGR (253 aa)) are Cytoplasmic-facing. Phosphoserine is present on residues S787 and S792. Phosphothreonine is present on T794. S802 is subject to Phosphoserine. T804 is subject to Phosphothreonine. Residues S831, S842, S864, S948, and S969 each carry the phosphoserine modification.

Belongs to the ATG9 family. In terms of assembly, homotrimer; forms a homotrimer with a central pore that forms a path between the two membrane leaflets. Interacts with ATG23 and ATG27 to form a cycling complex for trafficking to the PAS. Interacts (via N-terminus) with ATG11, required for recruitment of ATG9 to the PAS for the Cvt pathway during nutrient-rich conditions. Interacts (via N-terminus) with ATG17; required for recruitment to the PAS during autophagy and starved conditions. Interacts with ATG2 and ATG18; required for the retrieval of ATG9 from the PAS to the cytoplasmic pool. Interacts with ATG41. Interacts with the conserved oligomeric Golgi (COG) complex subunits COG3 and COG4. Interacts with TRS85. Phosphorylated by ATG1; phosphorylation is required for autophagy and cytoplasm to vacuole transport (Cvt) vesicle formation. Phosphorylation by ATG1 regulates ATG18 interaction and preautophagosome elongation. Phosphorylation at Ser-122 is required for selective autophagy by regulating anterograde trafficking and interaction with ATG23 and ATG27. Phosphorylation at Ser-122 prevents ubiquitination by the SCF(MET30) complex. In terms of processing, ubiquitinated by the SCF(MET30) complex in normal conditions, leading to its degradation by the proteasome, thereby preventing inappropriate induction of autophagy. Ubiquitination by the SCF(MET30) complex is prevented by phosphorylation at Ser-122.

The protein localises to the preautophagosomal structure membrane. The protein resides in the cytoplasmic vesicle membrane. It is found in the golgi apparatus membrane. It localises to the endoplasmic reticulum membrane. Its subcellular location is the mitochondrion membrane. The enzyme catalyses a 1,2-diacyl-sn-glycero-3-phosphocholine(in) = a 1,2-diacyl-sn-glycero-3-phosphocholine(out). It catalyses the reaction a 1,2-diacyl-sn-glycero-3-phospho-L-serine(in) = a 1,2-diacyl-sn-glycero-3-phospho-L-serine(out). It carries out the reaction a 1,2-diacyl-sn-glycero-3-phosphoethanolamine(in) = a 1,2-diacyl-sn-glycero-3-phosphoethanolamine(out). The catalysed reaction is a 1,2-diacyl-sn-glycero-3-phospho-(1D-myo-inositol-3-phosphate)(in) = a 1,2-diacyl-sn-glycero-3-phospho-(1D-myo-inositol-3-phosphate)(out). Phospholipid scramblase involved in autophagy and cytoplasm to vacuole transport (Cvt) vesicle formation. Cycles between the preautophagosomal structure/phagophore assembly site (PAS) and the cytoplasmic vesicle pool and supplies membrane for the growing autophagosome. Lipid scramblase activity plays a key role in preautophagosomal structure/phagophore assembly by distributing the phospholipids that arrive through ATG2 from the cytoplasmic to the luminal leaflet of the bilayer, thereby driving autophagosomal membrane expansion. Required for mitophagy. Also involved in endoplasmic reticulum-specific autophagic process and is essential for the survival of cells subjected to severe ER stress. Different machineries are required for anterograde trafficking to the PAS during either the Cvt pathway or bulk autophagy and for retrograde trafficking. Recruits vesicle-tethering proteins TRS85 and YPT1 to the autophagosome formation site. Also recruits ATG23 and ATG8 to the PAS. This Saccharomyces cerevisiae (strain YJM789) (Baker's yeast) protein is Autophagy-related protein 9.